The chain runs to 397 residues: Xyloglucan O-acetyltransferase 3 (397 aa).

The Cytoplasmic portion of the chain corresponds to 1-3 (MNR). A helical; Signal-anchor for type II membrane protein membrane pass occupies residues 4–24 (FFYTVGLIFLFSFFILYSPKT). Residues 25 to 397 (SDLSNNVDLH…RHAFTDFTWS (373 aa)) are Lumenal-facing. 4 cysteine pairs are disulfide-bonded: cysteine 48-cysteine 98, cysteine 69-cysteine 134, cysteine 78-cysteine 370, and cysteine 293-cysteine 366. Asparagine 66 carries N-linked (GlcNAc...) asparagine glycosylation. Residues 121–123 (GDS) carry the GDS motif motif. The active-site Nucleophile is serine 123. 3 N-linked (GlcNAc...) asparagine glycosylation sites follow: asparagine 162, asparagine 182, and asparagine 294. The Proton donor role is filled by aspartate 365. A DXXH motif motif is present at residues 365–368 (DCVH). The active-site Proton acceptor is histidine 368.

The protein belongs to the PC-esterase family. TBL subfamily.

It is found in the golgi apparatus membrane. Functionally, xyloglucan acetyltransferase that catalyzes the acetylation of fucosylated Gal residues on xyloglucan side chains. Predominantly catalyze 6-O-monoacetylation of Gal residues in the Fuc-Gal-Xyl trisaccharide side chains of xyloglucan oligomers. The sequence is that of Xyloglucan O-acetyltransferase 3 from Populus trichocarpa (Western balsam poplar).